The following is a 478-amino-acid chain: Cytochrome c-552 (478 aa).

The first 26 residues, 1–26, serve as a signal peptide directing secretion; sequence MTRIKINARRIFSLLIPFFFFTSVHA. His-94 is a heme c binding site. 3 residues coordinate heme: Cys-122, Cys-125, and Lys-126. Residues Cys-160, Cys-163, His-164, Cys-209, Cys-212, and His-213 each contribute to the heme c site. Residues Glu-215, Tyr-216, Lys-261, and Gln-263 each coordinate Ca(2+). Tyr-216 serves as a coordination point for substrate. Position 264 (His-264) interacts with substrate. Heme c contacts are provided by His-275, Cys-282, Cys-285, His-286, His-301, Cys-314, Cys-317, His-318, and His-393.

Belongs to the cytochrome c-552 family. The cofactor is Ca(2+). Heme c serves as cofactor.

Its subcellular location is the periplasm. The catalysed reaction is 6 Fe(III)-[cytochrome c] + NH4(+) + 2 H2O = 6 Fe(II)-[cytochrome c] + nitrite + 8 H(+). It participates in nitrogen metabolism; nitrate reduction (assimilation). Its function is as follows. Catalyzes the reduction of nitrite to ammonia, consuming six electrons in the process. This chain is Cytochrome c-552, found in Shigella flexneri.